A 484-amino-acid chain; its full sequence is Glutamyl-tRNA(Gln) amidotransferase subunit A (484 aa).

Active-site charge relay system residues include Lys76 and Ser151. Ser175 (acyl-ester intermediate) is an active-site residue.

This sequence belongs to the amidase family. GatA subfamily. In terms of assembly, heterotrimer of A, B and C subunits.

It carries out the reaction L-glutamyl-tRNA(Gln) + L-glutamine + ATP + H2O = L-glutaminyl-tRNA(Gln) + L-glutamate + ADP + phosphate + H(+). Functionally, allows the formation of correctly charged Gln-tRNA(Gln) through the transamidation of misacylated Glu-tRNA(Gln) in organisms which lack glutaminyl-tRNA synthetase. The reaction takes place in the presence of glutamine and ATP through an activated gamma-phospho-Glu-tRNA(Gln). The protein is Glutamyl-tRNA(Gln) amidotransferase subunit A of Thioalkalivibrio sulfidiphilus (strain HL-EbGR7).